Consider the following 909-residue polypeptide: Protein translocase subunit SecA (909 aa).

ATP is bound by residues Gln-85, 103 to 107 (GEGKT), and Asp-512. A disordered region spans residues 866–899 (HETSATGGEEEINKPVVKGKKIGRNDPCPCGSGK). Cys-893, Cys-895, Cys-904, and Cys-905 together coordinate Zn(2+).

This sequence belongs to the SecA family. Monomer and homodimer. Part of the essential Sec protein translocation apparatus which comprises SecA, SecYEG and auxiliary proteins SecDF. Other proteins may also be involved. The cofactor is Zn(2+).

It is found in the cell membrane. The protein localises to the cytoplasm. It carries out the reaction ATP + H2O + cellular proteinSide 1 = ADP + phosphate + cellular proteinSide 2.. Functionally, part of the Sec protein translocase complex. Interacts with the SecYEG preprotein conducting channel. Has a central role in coupling the hydrolysis of ATP to the transfer of proteins into and across the cell membrane, serving as an ATP-driven molecular motor driving the stepwise translocation of polypeptide chains across the membrane. The sequence is that of Protein translocase subunit SecA from Finegoldia magna (strain ATCC 29328 / DSM 20472 / WAL 2508) (Peptostreptococcus magnus).